The following is a 257-amino-acid chain: ECF RNA polymerase sigma factor SigE (257 aa).

Residues 87–153 (MPSWDELVRQ…RITTNLFLDM (67 aa)) form a sigma-70 factor domain-2 region. The Polymerase core binding motif lies at 111–114 (NQHD). A sigma-70 factor domain-4 region spans residues 186–236 (SRLGADLQAALDSLPPEFRAAVVLCDIEGLSYEEIGATLGVKLGTVRSRIH). A DNA-binding region (H-T-H motif) is located at residues 211–230 (DIEGLSYEEIGATLGVKLGT).

The protein belongs to the sigma-70 factor family. ECF subfamily. In terms of assembly, interacts transiently with the RNA polymerase catalytic core formed by RpoA, RpoB, RpoC and RpoZ (2 alpha, 1 beta, 1 beta' and 1 omega subunit) to form the RNA polymerase holoenzyme that can initiate transcription. Interacts (via sigma-70 factor domain 4) with RseA; interaction is abrogated by treatment of cells with H(2)O(2) or detergent.

In terms of biological role, sigma factors are initiation factors that promote the attachment of RNA polymerase to specific initiation sites and are then released. Extracytoplasmic function (ECF) sigma factors are held in an inactive form by an anti-sigma factor until released. The polypeptide is ECF RNA polymerase sigma factor SigE (sigE) (Mycolicibacterium smegmatis (strain ATCC 700084 / mc(2)155) (Mycobacterium smegmatis)).